The primary structure comprises 205 residues: Small ribosomal subunit protein uS5 (205 aa).

A disordered region spans residues 1-25 (MSGAQRGQRGGERRGGRDDRRGQGA). Residues 9-24 (RGGERRGGRDDRRGQG) are compositionally biased toward basic and acidic residues. One can recognise an S5 DRBM domain in the interval 30 to 93 (YIERVVAINR…EEAKKHFFRV (64 aa)).

It belongs to the universal ribosomal protein uS5 family. As to quaternary structure, part of the 30S ribosomal subunit. Contacts proteins S4 and S8.

Its function is as follows. With S4 and S12 plays an important role in translational accuracy. Functionally, located at the back of the 30S subunit body where it stabilizes the conformation of the head with respect to the body. The protein is Small ribosomal subunit protein uS5 of Nocardioides sp. (strain ATCC BAA-499 / JS614).